The chain runs to 876 residues: Alanine--tRNA ligase (876 aa).

Residues H562, H566, C666, and H670 each contribute to the Zn(2+) site.

The protein belongs to the class-II aminoacyl-tRNA synthetase family. Requires Zn(2+) as cofactor.

It is found in the cytoplasm. The enzyme catalyses tRNA(Ala) + L-alanine + ATP = L-alanyl-tRNA(Ala) + AMP + diphosphate. In terms of biological role, catalyzes the attachment of alanine to tRNA(Ala) in a two-step reaction: alanine is first activated by ATP to form Ala-AMP and then transferred to the acceptor end of tRNA(Ala). Also edits incorrectly charged Ser-tRNA(Ala) and Gly-tRNA(Ala) via its editing domain. This chain is Alanine--tRNA ligase, found in Hahella chejuensis (strain KCTC 2396).